A 199-amino-acid polypeptide reads, in one-letter code: Recombination protein RecR (199 aa).

A C4-type zinc finger spans residues 56–71 (CQQCNNYTEQTLCALC). A Toprim domain is found at 79 to 174 (TLLCVVESPA…NISQLAHGIP (96 aa)).

The protein belongs to the RecR family.

In terms of biological role, may play a role in DNA repair. It seems to be involved in an RecBC-independent recombinational process of DNA repair. It may act with RecF and RecO. The protein is Recombination protein RecR of Legionella pneumophila subsp. pneumophila (strain Philadelphia 1 / ATCC 33152 / DSM 7513).